A 214-amino-acid polypeptide reads, in one-letter code: Holliday junction branch migration complex subunit RuvA (214 aa).

Positions 1–68 (MIGFLQGKVL…QPKPVLIGFD (68 aa)) are domain I. The segment at 69–146 (SAEEKDFFQL…RFLLAADEAG (78 aa)) is domain II. A flexible linker region spans residues 147–160 (AGDGVSKTGTPSLP). Residues 161 to 214 (IQKAIDQVVDVLVQQLGHTPSAAKMMVAQALDRDPEIMTPEALFDEVYKGDVDA) form a domain III region.

It belongs to the RuvA family. Homotetramer. Forms an RuvA(8)-RuvB(12)-Holliday junction (HJ) complex. HJ DNA is sandwiched between 2 RuvA tetramers; dsDNA enters through RuvA and exits via RuvB. An RuvB hexamer assembles on each DNA strand where it exits the tetramer. Each RuvB hexamer is contacted by two RuvA subunits (via domain III) on 2 adjacent RuvB subunits; this complex drives branch migration. In the full resolvosome a probable DNA-RuvA(4)-RuvB(12)-RuvC(2) complex forms which resolves the HJ.

The protein localises to the cytoplasm. Its function is as follows. The RuvA-RuvB-RuvC complex processes Holliday junction (HJ) DNA during genetic recombination and DNA repair, while the RuvA-RuvB complex plays an important role in the rescue of blocked DNA replication forks via replication fork reversal (RFR). RuvA specifically binds to HJ cruciform DNA, conferring on it an open structure. The RuvB hexamer acts as an ATP-dependent pump, pulling dsDNA into and through the RuvAB complex. HJ branch migration allows RuvC to scan DNA until it finds its consensus sequence, where it cleaves and resolves the cruciform DNA. The protein is Holliday junction branch migration complex subunit RuvA of Desulforapulum autotrophicum (strain ATCC 43914 / DSM 3382 / VKM B-1955 / HRM2) (Desulfobacterium autotrophicum).